Reading from the N-terminus, the 366-residue chain is GTP cyclohydrolase 1 type 2 homolog (366 aa).

His-64, His-65, Asp-102, His-326, and Glu-329 together coordinate Zn(2+).

The protein belongs to the GTP cyclohydrolase I type 2/NIF3 family. As to quaternary structure, toroid-shaped homohexamer that has a central cavity of about 38 Angstroms diameter.

The sequence is that of GTP cyclohydrolase 1 type 2 homolog from Staphylococcus aureus (strain Mu50 / ATCC 700699).